We begin with the raw amino-acid sequence, 671 residues long: Archaeal Rqc2 homolog aRqcH (671 aa).

Coiled-coil stretches lie at residues 291–363 and 410–465; these read KVVV…ARIK and RKNA…MQMK.

The protein belongs to the NEMF family. In terms of assembly, associates with stalled 50S ribosomal subunits.

In terms of biological role, probably part of the ribosome quality control system (RQC). May mediate the addition of alanine residues (Ala tailing) to incompletely synthesized nascent chains from stalled ribosomes, leading to their degradation. The sequence is that of Archaeal Rqc2 homolog aRqcH from Methanocaldococcus jannaschii (strain ATCC 43067 / DSM 2661 / JAL-1 / JCM 10045 / NBRC 100440) (Methanococcus jannaschii).